The primary structure comprises 75 residues: Large ribosomal subunit protein uL29 (75 aa).

Belongs to the universal ribosomal protein uL29 family.

The protein is Large ribosomal subunit protein uL29 of Nostoc punctiforme (strain ATCC 29133 / PCC 73102).